A 199-amino-acid polypeptide reads, in one-letter code: Peroxiredoxin 2 (199 aa).

A Thioredoxin domain is found at 8 to 166 (AFIGQPAPNF…TLRLIQAFQF (159 aa)). The active-site Cysteine sulfenic acid (-SOH) intermediate is the Cys-53.

Belongs to the peroxiredoxin family. AhpC/Prx1 subfamily. In terms of assembly, homodimer; disulfide-linked, upon oxidation.

It catalyses the reaction a hydroperoxide + [thioredoxin]-dithiol = an alcohol + [thioredoxin]-disulfide + H2O. Thiol-specific peroxidase that catalyzes the reduction of hydrogen peroxide and organic hydroperoxides to water and alcohols, respectively. Plays a role in cell protection against oxidative stress by detoxifying peroxides and as sensor of hydrogen peroxide-mediated signaling events. In Brugia malayi (Filarial nematode worm), this protein is Peroxiredoxin 2 (tsa-2).